Here is a 94-residue protein sequence, read N- to C-terminus: Co-chaperonin GroES (94 aa).

This sequence belongs to the GroES chaperonin family. Heptamer of 7 subunits arranged in a ring. Interacts with the chaperonin GroEL.

Its subcellular location is the cytoplasm. Functionally, together with the chaperonin GroEL, plays an essential role in assisting protein folding. The GroEL-GroES system forms a nano-cage that allows encapsulation of the non-native substrate proteins and provides a physical environment optimized to promote and accelerate protein folding. GroES binds to the apical surface of the GroEL ring, thereby capping the opening of the GroEL channel. This chain is Co-chaperonin GroES, found in Lactococcus lactis subsp. cremoris (strain SK11).